A 242-amino-acid polypeptide reads, in one-letter code: Caffeoyl-CoA O-methyltransferase 2 (242 aa).

A substrate-binding site is contributed by K16. Residues T58, E80, 82–83 (GV), S88, D106, and A135 contribute to the S-adenosyl-L-methionine site. D158 provides a ligand contact to substrate. A divalent metal cation is bound at residue D158. D160 contributes to the S-adenosyl-L-methionine binding site. A divalent metal cation is bound by residues D184 and N185. Substrate is bound at residue N189.

This sequence belongs to the class I-like SAM-binding methyltransferase superfamily. Cation-dependent O-methyltransferase family. CCoAMT subfamily. It depends on Mg(2+) as a cofactor. In terms of tissue distribution, mostly expressed in the bottom and middle parts of the stems.

The catalysed reaction is (E)-caffeoyl-CoA + S-adenosyl-L-methionine = (E)-feruloyl-CoA + S-adenosyl-L-homocysteine + H(+). It participates in aromatic compound metabolism; phenylpropanoid biosynthesis. Its function is as follows. Methylates caffeoyl-CoA to feruloyl-CoA and 5-hydroxyferuloyl-CoA to sinapoyl-CoA. Plays a role in the synthesis of feruloylated polysaccharides. Involved in the reinforcement of the plant cell wall. Also involved in the responding to wounding or pathogen challenge by the increased formation of cell wall-bound ferulic acid polymers. Methylates 5-hydroxyferulolyl-CoA more efficiently than caffeoyl-CoA. The chain is Caffeoyl-CoA O-methyltransferase 2 (CCOAOMT2) from Nicotiana tabacum (Common tobacco).